The following is a 129-amino-acid chain: Lysozyme C (129 aa).

Residues 1–129 form the C-type lysozyme domain; it reads KVYGRCELAA…VQAWIRGCRL (129 aa). 4 disulfides stabilise this stretch: Cys6/Cys127, Cys30/Cys115, Cys64/Cys80, and Cys76/Cys94. Catalysis depends on residues Glu35 and Asp52.

It belongs to the glycosyl hydrolase 22 family. In terms of assembly, monomer.

The protein localises to the secreted. It carries out the reaction Hydrolysis of (1-&gt;4)-beta-linkages between N-acetylmuramic acid and N-acetyl-D-glucosamine residues in a peptidoglycan and between N-acetyl-D-glucosamine residues in chitodextrins.. Functionally, lysozymes have primarily a bacteriolytic function; those in tissues and body fluids are associated with the monocyte-macrophage system and enhance the activity of immunoagents. This is Lysozyme C (LYZ) from Tragopan satyra (Satyr tragopan).